The chain runs to 323 residues: tRNA dimethylallyltransferase (323 aa).

ATP is bound at residue 32 to 39 (GPTASGKS). 34–39 (TASGKS) contributes to the substrate binding site. The tract at residues 57 to 60 (DSMQ) is interaction with substrate tRNA.

The protein belongs to the IPP transferase family. Monomer. Requires Mg(2+) as cofactor.

It carries out the reaction adenosine(37) in tRNA + dimethylallyl diphosphate = N(6)-dimethylallyladenosine(37) in tRNA + diphosphate. In terms of biological role, catalyzes the transfer of a dimethylallyl group onto the adenine at position 37 in tRNAs that read codons beginning with uridine, leading to the formation of N6-(dimethylallyl)adenosine (i(6)A). The protein is tRNA dimethylallyltransferase of Rhodopseudomonas palustris (strain BisB5).